The primary structure comprises 107 residues: Flagellar transcriptional regulator FlhD (107 aa).

The protein belongs to the FlhD family. Homodimer; disulfide-linked. Forms a heterohexamer composed of two FlhC and four FlhD subunits. Each FlhC binds a FlhD dimer, forming a heterotrimer, and a hexamer assembles by dimerization of two heterotrimers.

Its subcellular location is the cytoplasm. Functions in complex with FlhC as a master transcriptional regulator that regulates transcription of several flagellar and non-flagellar operons by binding to their promoter region. Activates expression of class 2 flagellar genes, including fliA, which is a flagellum-specific sigma factor that turns on the class 3 genes. Also regulates genes whose products function in a variety of physiological pathways. This is Flagellar transcriptional regulator FlhD from Bordetella bronchiseptica (strain ATCC BAA-588 / NCTC 13252 / RB50) (Alcaligenes bronchisepticus).